A 151-amino-acid polypeptide reads, in one-letter code: Methylated-DNA--protein-cysteine methyltransferase (151 aa).

The Nucleophile; methyl group acceptor role is filled by cysteine 119.

This sequence belongs to the MGMT family.

It is found in the cytoplasm. It carries out the reaction a 6-O-methyl-2'-deoxyguanosine in DNA + L-cysteinyl-[protein] = S-methyl-L-cysteinyl-[protein] + a 2'-deoxyguanosine in DNA. The catalysed reaction is a 4-O-methyl-thymidine in DNA + L-cysteinyl-[protein] = a thymidine in DNA + S-methyl-L-cysteinyl-[protein]. Involved in the cellular defense against the biological effects of O6-methylguanine (O6-MeG) and O4-methylthymine (O4-MeT) in DNA. Repairs the methylated nucleobase in DNA by stoichiometrically transferring the methyl group to a cysteine residue in the enzyme. This is a suicide reaction: the enzyme is irreversibly inactivated. This Saccharolobus islandicus (strain M.16.27) (Sulfolobus islandicus) protein is Methylated-DNA--protein-cysteine methyltransferase.